A 770-amino-acid polypeptide reads, in one-letter code: Coiled-coil alpha-helical rod protein 1 (770 aa).

Coiled coils occupy residues 56 to 289, 334 to 420, and 476 to 669; these read STVT…DLQA, LRNW…RQEQ, and GLMA…RKEE. Disordered regions lie at residues 573–592, 641–672, 700–721, and 744–770; these read LEAA…SLRQ, LRQI…EGQR, NKKC…AASC, and SRDE…PLLS. Residues 648 to 672 show a composition bias toward basic and acidic residues; it reads ATQEKERNQELRRLQDEARKEEGQR. The span at 701–721 shows a compositional bias: low complexity; sequence KKCSPRSVESSSSESPAAASC.

It is found in the cytoplasm. The protein localises to the nucleus. In terms of biological role, may be a regulator of keratinocyte proliferation or differentiation. This chain is Coiled-coil alpha-helical rod protein 1 (Cchcr1), found in Mus musculus (Mouse).